The following is a 687-amino-acid chain: C-mannosyltransferase dpy-19 (687 aa).

Helical transmembrane passes span 24-44 (GISGNLWLATVVLIGLFVGFL), 170-190 (ITGVFVVAGTVATSLFYLGVL), 191-211 (VSDSIFGGILSVLCFAFNHGE), 223-243 (ESFAFPFIIGHIAILTYIIKY), 253-273 (LLISAAVPALLFWQFTQFAFF), 276-296 (ICSIFAAFSMDLVPLDTAKTI), 303-323 (AFFISFVMLFGNEMMIAALYF), 324-344 (PSIWALATVIYISPMLAGIRL), 347-367 (LYLLILALIFGSITLGLKVGF), 415-435 (LSSTLLIPLALLSIGAFSWDF), and 454-474 (GEVIYNLVQLICSTTMAVLIM).

Belongs to the dpy-19 family.

It localises to the endoplasmic reticulum membrane. C-mannosyltransferase that mediates C-mannosylation of tryptophan residues on target proteins such as unc-5 and mig-21. Mediates the attachment of alpha-mannose in C-C linkage to the C2 of the indole ring of tryptophan. C-mannosylation takes place in the endoplasmic reticulum and frequently found in thrombospondin (TSP) type-1 repeats and in the WSXWS motif of type I cytokine receptors. Required to orient neuroblasts QL and QR correctly on the anterior/posterior (A/P) axis: QL and QR are born in the same A/P position, but polarize and migrate left/right asymmetrically, QL migrates toward the posterior and QR migrates toward the anterior. Required with unc-40 to express mab-5 correctly in the Q cell descendants. This Caenorhabditis briggsae protein is C-mannosyltransferase dpy-19.